A 265-amino-acid chain; its full sequence is MLLTIDVGNTHTVLGLFDGEDIVEHWRISTDARRTADELAVLLQGLMGMHPLLGEELGDGIDGIAICSTVPSVLHELREVTRRYYGDVPAVLVEPGIKTGVPILMDNPKEVGADRIINAVAAVELYGGPAIVVDFGTATTFDAVSARGEYAGGVIAPGIEISVEALGVRGAQLRKIELARPRAVIGKNTVEAMQAGIVYGFAGQVDGVVTRMARELADDPDDVTVIATGGLAPMVLGEASVIDEHEPWLTLIGLRLVYERNISRT.

6 to 13 (DVGNTHTV) serves as a coordination point for ATP. 112–115 (GADR) contributes to the substrate binding site. Residue Asp114 is the Proton acceptor of the active site. Asp134 contacts K(+). Thr137 serves as a coordination point for ATP. Thr189 contributes to the substrate binding site.

The protein belongs to the type III pantothenate kinase family. Homodimer. The cofactor is NH4(+). It depends on K(+) as a cofactor.

The protein localises to the cytoplasm. The catalysed reaction is (R)-pantothenate + ATP = (R)-4'-phosphopantothenate + ADP + H(+). It functions in the pathway cofactor biosynthesis; coenzyme A biosynthesis; CoA from (R)-pantothenate: step 1/5. In terms of biological role, catalyzes the phosphorylation of pantothenate (Pan), the first step in CoA biosynthesis. This Streptomyces avermitilis (strain ATCC 31267 / DSM 46492 / JCM 5070 / NBRC 14893 / NCIMB 12804 / NRRL 8165 / MA-4680) protein is Type III pantothenate kinase.